The following is a 102-amino-acid chain: Heat shock protein HspQ (102 aa).

It belongs to the HspQ family.

It is found in the cytoplasm. In terms of biological role, involved in the degradation of certain denaturated proteins, including DnaA, during heat shock stress. The sequence is that of Heat shock protein HspQ from Pectobacterium atrosepticum (strain SCRI 1043 / ATCC BAA-672) (Erwinia carotovora subsp. atroseptica).